A 144-amino-acid chain; its full sequence is Large ribosomal subunit protein uL15 (144 aa).

The disordered stretch occupies residues 1–53; that stretch reads MRLNTLSPADGSKHAPKRLGRGIGSGLGKTGGRGHKGQNSRSGGGVRRGFEGG. Positions 21-31 are enriched in gly residues; the sequence is RGIGSGLGKTG.

The protein belongs to the universal ribosomal protein uL15 family. As to quaternary structure, part of the 50S ribosomal subunit.

Functionally, binds to the 23S rRNA. The chain is Large ribosomal subunit protein uL15 from Erwinia tasmaniensis (strain DSM 17950 / CFBP 7177 / CIP 109463 / NCPPB 4357 / Et1/99).